A 290-amino-acid polypeptide reads, in one-letter code: Endonuclease 2 (290 aa).

The N-terminal stretch at 1–27 is a signal peptide; the sequence is MANQKGLHVVMMIITVWLLYAAPNIHG. Residues Trp-28 and His-33 each coordinate a divalent metal cation. 28–33 provides a ligand contact to substrate; the sequence is WGKEGH. An intrachain disulfide couples Cys-37 to Cys-68. Positions 72 and 85 each coordinate a divalent metal cation. Substrate-binding positions include 72–76, 85–88, and 94–99; these read DRVKF, HYIN, and SYQYNR. 3 disulfide bridges follow: Cys-93–Cys-245, Cys-101–Cys-111, and Cys-226–Cys-232. Positions 118 and 136 each coordinate substrate. A glycan (N-linked (GlcNAc...) asparagine) is linked at Asn-118. Asn-137 carries N-linked (GlcNAc...) asparagine glycosylation. A divalent metal cation is bound by residues His-147, Asp-151, His-157, His-181, and Asp-185. The segment at 147 to 196 is substrate binding; the sequence is HFMGDIHQPLHVSYASDKGGNTIEVHWYTRKANLHHIWDSNIIETAEADL. N-linked (GlcNAc...) asparagine glycosylation occurs at Asn-211. A propeptide spans 283-290 (removed in mature form); it reads ATLNRIFG.

The protein belongs to the nuclease type I family. As to quaternary structure, monomer. Mn(2+) serves as cofactor. Requires Ca(2+) as cofactor. It depends on Zn(2+) as a cofactor. In terms of processing, N-glycosylation is required for enzymatic stability and activity.

It carries out the reaction Endonucleolytic cleavage to 5'-phosphomononucleotide and 5'-phosphooligonucleotide end-products.. With respect to regulation, ssDNase activity is inhibited by the divalent cation chelator EDTA and the reducing agent DTT. Divalent metal ions (e.g. Ca(2+), Mg(2+) and Zn(2+)) and DTT represses RNase activity. RNase activity is enhanced by EDTA. Also repressed by vanadate (VO(4)(3-)) and phosphate (PO(4)(3-)) by occupying the active site. Endonuclease mostly active on RNA and ssDNA, and to a lower extent, on dsDNA. Can cleave mismatch regions in heteroduplex DNA containing single base pair mismatches or insertion/deletion bases. In contradiction with PubMed:22506810, cannot hydrolyze single-stranded DNA and does not cleave mismatches. This Arabidopsis thaliana (Mouse-ear cress) protein is Endonuclease 2.